The sequence spans 458 residues: Mitochondrial-processing peptidase subunit beta (458 aa).

Residues 1–41 (MYRRLASGLYQTSQRRIAQVQPKSVFVPETIVTTLPNGFRV) constitute a mitochondrion transit peptide. H73 contributes to the Zn(2+) binding site. Catalysis depends on E76, which acts as the Proton acceptor. Residues H77 and E153 each contribute to the Zn(2+) site.

The protein belongs to the peptidase M16 family. Heterodimer of mppa-1 (alpha) and mppb-1 (beta) subunits, forming the mitochondrial processing protease (MPP) in which mppa-1 is involved in substrate recognition and binding and mppb-1 is the catalytic subunit. Zn(2+) serves as cofactor.

Its subcellular location is the mitochondrion matrix. The enzyme catalyses Release of N-terminal transit peptides from precursor proteins imported into the mitochondrion, typically with Arg in position P2.. Binding to mppa-1 is required for catalytic activity. Inhibited by metal chelator ethylenediaminetetraacetic acid (EDTA). Catalytic subunit of the essential mitochondrial processing protease (MPP), which cleaves the mitochondrial sequence off newly imported precursors proteins. Preferentially, cleaves after an arginine at position P2. The sequence is that of Mitochondrial-processing peptidase subunit beta from Caenorhabditis elegans.